Reading from the N-terminus, the 335-residue chain is Serpentine receptor class alpha-13 (335 aa).

Topologically, residues 1–22 are extracellular; it reads MAIVSSENRTCADEKLLALYQS. A helical transmembrane segment spans residues 23–43; the sequence is WSYIASIVFNCLVPTISTYFL. The Cytoplasmic portion of the chain corresponds to 44–61; the sequence is GRAIFQLCNQATIQYSTR. Residues 62–82 traverse the membrane as a helical segment; that stretch reads ILLIATILFAACHQVSYFAFK. Residues 83–107 are Extracellular-facing; it reads IDLLHTMFFKLDQPCFLQRSSYDCR. The helical transmembrane segment at 108-128 threads the bilayer; the sequence is FISIAQTTGVVGMALTGLAMS. Residues 129–149 lie on the Cytoplasmic side of the membrane; sequence TDRALALTFPADYHKLKSVPR. Residues 150-170 form a helical membrane-spanning segment; it reads VVLSVFVFIVSFSTWFLLTMN. At 171–192 the chain is on the extracellular side; it reads DPLTGYLNHCGFYPSYSVANFQ. A helical membrane pass occupies residues 193-213; it reads LMLDVILYLAIFNLIWDVILF. Topologically, residues 214–235 are cytoplasmic; the sequence is YYARQQILWRRSYQFQKRYEAR. A helical transmembrane segment spans residues 236–255; that stretch reads ISLNCTQAVFVISICQCISN. Residues 256–278 lie on the Extracellular side of the membrane; that stretch reads GANSGLMRLLMMIGTSITSVTYS. Residues 279–299 traverse the membrane as a helical segment; that stretch reads SLLSLFYTAPYSCILLPILMM. Topologically, residues 300 to 335 are cytoplasmic; sequence RISEYIREQRTIGILSLRSEKPGLEEHHQRMRAAWS.

The protein belongs to the nematode receptor-like protein sra family.

The protein localises to the membrane. Chemosensory receptor that negatively regulates RAS/MAPK signaling during vulva induction and the negative regulation of olfaction of volitile attractants. Required for the suppression of vulval induction in response to food starvation. Signaling acts through the GPA-5 G-alpha protein subunit. This is Serpentine receptor class alpha-13 from Caenorhabditis briggsae.